Reading from the N-terminus, the 874-residue chain is Probable inorganic carbon transporter subunit DabA (874 aa).

Zn(2+)-binding residues include Cys-398, Asp-400, His-580, and Cys-595.

It belongs to the inorganic carbon transporter (TC 9.A.2) DabA family. In terms of assembly, forms a complex with DabB. Zn(2+) is required as a cofactor.

It localises to the cell membrane. In terms of biological role, part of an energy-coupled inorganic carbon pump. The polypeptide is Probable inorganic carbon transporter subunit DabA (Bacillus cereus (strain AH820)).